Reading from the N-terminus, the 506-residue chain is Light-independent protochlorophyllide reductase subunit B (506 aa).

Aspartate 36 lines the [4Fe-4S] cluster pocket. The active-site Proton donor is the aspartate 279. 414–415 (GL) contacts substrate.

The protein belongs to the ChlB/BchB/BchZ family. As to quaternary structure, protochlorophyllide reductase is composed of three subunits; BchL, BchN and BchB. Forms a heterotetramer of two BchB and two BchN subunits. [4Fe-4S] cluster is required as a cofactor.

It carries out the reaction chlorophyllide a + oxidized 2[4Fe-4S]-[ferredoxin] + 2 ADP + 2 phosphate = protochlorophyllide a + reduced 2[4Fe-4S]-[ferredoxin] + 2 ATP + 2 H2O. The protein operates within porphyrin-containing compound metabolism; bacteriochlorophyll biosynthesis (light-independent). Component of the dark-operative protochlorophyllide reductase (DPOR) that uses Mg-ATP and reduced ferredoxin to reduce ring D of protochlorophyllide (Pchlide) to form chlorophyllide a (Chlide). This reaction is light-independent. The NB-protein (BchN-BchB) is the catalytic component of the complex. This is Light-independent protochlorophyllide reductase subunit B from Methylobacterium sp. (strain 4-46).